The following is an 818-amino-acid chain: Exchange factor for Arf-6 (818 aa).

Disordered stretches follow at residues A92–P123, M137–D168, N208–N291, and R326–E383. Positions I107–E119 are enriched in basic and acidic residues. Residues T140–T149 show a composition bias toward acidic residues. Residues T154–E165 show a composition bias toward basic and acidic residues. Composition is skewed to polar residues over residues Y213–S223 and M255–N269. Residues R326–T347 are compositionally biased toward low complexity. Residues G356–N532 form the SEC7 domain. The segment covering S361 to V380 has biased composition (polar residues). A PH domain is found at V569–A681. Residues T782–P799 show a composition bias toward polar residues. The segment at T782–H818 is disordered.

Interacts (via short N-terminal region) with microtubule-associated proteins tac-1 and zyg-8.

The protein resides in the cytoplasm. It localises to the cell cortex. Its subcellular location is the cell membrane. Guanine nucleotide exchange factor for arf-6. Involved in response to injury in mechanosensory neurons. Inhibits axon regrowth via microtubule dynamics, possibly by inducing axonal microtubule catastrophes. Limits microtubule growth near the cellular cortex of early embryonic cells. The polypeptide is Exchange factor for Arf-6 (Caenorhabditis elegans).